A 914-amino-acid chain; its full sequence is Polyribonucleotide nucleotidyltransferase (914 aa).

The interval 407–427 (YMHNYEMPPYSTGETGRVGSP) is disordered. The Mg(2+) site is built by Asp521 and Asp527. The 60-residue stretch at 587 to 646 (PRIITTSVPVEKIGEVIGPKGKMINQIQEDTGAEIAIEDDGTVFISSEGGEAAKKAKSII) folds into the KH domain. Residues 658-730 (GETYNGKVVK…DRGKISLAIP (73 aa)) enclose the S1 motif domain. The tract at residues 727 to 914 (LAIPGFEDQE…VRRDFDPFED (188 aa)) is disordered. 3 stretches are compositionally biased toward basic and acidic residues: residues 742–789 (SRGD…RRSD), 797–865 (DRPR…DRRG), and 873–899 (RGSD…ERTE).

Belongs to the polyribonucleotide nucleotidyltransferase family. Requires Mg(2+) as cofactor.

It is found in the cytoplasm. The catalysed reaction is RNA(n+1) + phosphate = RNA(n) + a ribonucleoside 5'-diphosphate. Its function is as follows. Involved in mRNA degradation. Catalyzes the phosphorolysis of single-stranded polyribonucleotides processively in the 3'- to 5'-direction. The sequence is that of Polyribonucleotide nucleotidyltransferase from Bifidobacterium longum subsp. infantis (strain ATCC 15697 / DSM 20088 / JCM 1222 / NCTC 11817 / S12).